Consider the following 276-residue polypeptide: Orotidine 5'-phosphate decarboxylase (276 aa).

Residues Asp-40, 62–64, 93–102, Tyr-228, and Arg-246 each bind substrate; these read KTH and DRKFIDIGNT. Residue Lys-95 is the Proton donor of the active site.

This sequence belongs to the OMP decarboxylase family.

It catalyses the reaction orotidine 5'-phosphate + H(+) = UMP + CO2. It functions in the pathway pyrimidine metabolism; UMP biosynthesis via de novo pathway; UMP from orotate: step 2/2. This chain is Orotidine 5'-phosphate decarboxylase (pyrG), found in Penicillium nalgiovense.